Consider the following 221-residue polypeptide: Very-long-chain (3R)-3-hydroxyacyl-CoA dehydratase PASTICCINO 2A (221 aa).

At 1–11 (MAGVGSAVRRL) the chain is on the cytoplasmic side. The helical transmembrane segment at 12–32 (YLSVYNWAVFFGWAQVLYYAV) threads the bilayer. Residues 33–51 (TTLLESGHEAVYAAVERPL) are Lumenal-facing. The helical transmembrane segment at 52–70 (QFAQTAAFLEILHGLVGLV) threads the bilayer. The Cytoplasmic segment spans residues 71–76 (RSPVSA). A helical transmembrane segment spans residues 77–95 (TLPQIGSRLFLTWGILWSF). Residues 96–100 (PETHS) lie on the Lumenal side of the membrane. The chain crosses the membrane as a helical span at residues 101–121 (HILVTSLVISWSITEIIRYSF). At 122-141 (FGMKEAFGFAPSWLLWLRYS) the chain is on the cytoplasmic side. The helical transmembrane segment at 142–165 (TFMVLYPTGISSEVGLIYIALPYM) threads the bilayer. Catalysis depends on residues Tyr147 and Glu154. Residues 166 to 184 (KASEKYCLRMPNKWNFSFD) are Lumenal-facing. Residues 185 to 209 (FFYASILSLAIYVPGSPHMFTYMLA) traverse the membrane as a helical segment. Over 210-221 (QRKKALAKAKAA) the chain is Cytoplasmic.

It belongs to the very long-chain fatty acids dehydratase HACD family.

It is found in the endoplasmic reticulum membrane. The catalysed reaction is a very-long-chain (3R)-3-hydroxyacyl-CoA = a very-long-chain (2E)-enoyl-CoA + H2O. The protein operates within lipid metabolism; fatty acid biosynthesis. Catalyzes the third of the four reactions of the long-chain fatty acids elongation cycle. This endoplasmic reticulum-bound enzymatic process, allows the addition of two carbons to the chain of long- and very long-chain fatty acids/VLCFAs per cycle. This enzyme catalyzes the dehydration of the 3-hydroxyacyl-CoA intermediate into trans-2,3-enoyl-CoA, within each cycle of fatty acid elongation. Thereby, it participates in the production of VLCFAs of different chain lengths that are involved in multiple biological processes as precursors of membrane lipids and lipid mediators. May be an anti-phosphatase that prevents CDKA-1 dephosphorylation and activation. Involved in the hormonal control of cell division and differentiation. Required for proliferation control of meristematic and non-meristematic cells. Negative regulator of the cell cycle. The sequence is that of Very-long-chain (3R)-3-hydroxyacyl-CoA dehydratase PASTICCINO 2A (PAS2A) from Oryza sativa subsp. japonica (Rice).